The chain runs to 294 residues: Release factor glutamine methyltransferase (294 aa).

S-adenosyl-L-methionine contacts are provided by residues 131-135 (GTGSG), Asp154, and Asn202. 202–205 (NPPY) is a substrate binding site.

This sequence belongs to the protein N5-glutamine methyltransferase family. PrmC subfamily.

It carries out the reaction L-glutaminyl-[peptide chain release factor] + S-adenosyl-L-methionine = N(5)-methyl-L-glutaminyl-[peptide chain release factor] + S-adenosyl-L-homocysteine + H(+). Methylates the class 1 translation termination release factors RF1/PrfA and RF2/PrfB on the glutamine residue of the universally conserved GGQ motif. This is Release factor glutamine methyltransferase from Chlorobaculum tepidum (strain ATCC 49652 / DSM 12025 / NBRC 103806 / TLS) (Chlorobium tepidum).